The following is a 224-amino-acid chain: Holliday junction branch migration complex subunit RuvA (224 aa).

A domain I region spans residues 1–64 (MIGRLSGVLV…EDLLQLYGFP (64 aa)). The segment at 65–143 (TLLEKEWHRL…EVMAMGGTLE (79 aa)) is domain II. The tract at residues 144–171 (AALDGVIEDGMAASEGIEPPSAARPAVP) is flexible linker. The tract at residues 172 to 224 (SAASDQAGALSALVNLGYGQGEAASAVATAAGEGAVGETDIIRAALRLLAPKG) is domain III.

It belongs to the RuvA family. As to quaternary structure, homotetramer. Forms an RuvA(8)-RuvB(12)-Holliday junction (HJ) complex. HJ DNA is sandwiched between 2 RuvA tetramers; dsDNA enters through RuvA and exits via RuvB. An RuvB hexamer assembles on each DNA strand where it exits the tetramer. Each RuvB hexamer is contacted by two RuvA subunits (via domain III) on 2 adjacent RuvB subunits; this complex drives branch migration. In the full resolvosome a probable DNA-RuvA(4)-RuvB(12)-RuvC(2) complex forms which resolves the HJ.

The protein resides in the cytoplasm. Its function is as follows. The RuvA-RuvB-RuvC complex processes Holliday junction (HJ) DNA during genetic recombination and DNA repair, while the RuvA-RuvB complex plays an important role in the rescue of blocked DNA replication forks via replication fork reversal (RFR). RuvA specifically binds to HJ cruciform DNA, conferring on it an open structure. The RuvB hexamer acts as an ATP-dependent pump, pulling dsDNA into and through the RuvAB complex. HJ branch migration allows RuvC to scan DNA until it finds its consensus sequence, where it cleaves and resolves the cruciform DNA. This chain is Holliday junction branch migration complex subunit RuvA, found in Dinoroseobacter shibae (strain DSM 16493 / NCIMB 14021 / DFL 12).